Consider the following 139-residue polypeptide: Large ribosomal subunit protein uL16 (139 aa).

Residues 1-19 (MLIPRRVKYRKQHHPKRTG) show a composition bias toward basic residues. Residues 1 to 23 (MLIPRRVKYRKQHHPKRTGAAKG) are disordered.

This sequence belongs to the universal ribosomal protein uL16 family. Part of the 50S ribosomal subunit.

In terms of biological role, binds 23S rRNA and is also seen to make contacts with the A and possibly P site tRNAs. The protein is Large ribosomal subunit protein uL16 of Cutibacterium acnes (strain DSM 16379 / KPA171202) (Propionibacterium acnes).